A 382-amino-acid polypeptide reads, in one-letter code: MKLHEHQSKELLKKYGLPVPEGYAAFNVKEAKEAAQALGGYPLVVKAQIHCGARGKAGGVKIVKSDEELEAFSEAILGKILKTVQCPNGKVVSRLLIEKATPIEKEFYLSITLDRSNSKILIMASKEGGMEIEELSKEKPDAIIKEYVDPVLGIMPYQTRKLSFALGLNPSLFGKIVSKLYQAYMDLDASLLEINPLVLTKDGDIVLLDAKVEIDDNAAFRHKDIEELEDITQIDPLEVEAKKYGLNYIKLEGNIGCMVNGAGLAMTTMDIIKLAGGAPANFLDVGGGASVEQIANAFRILTSDENVKAVFINIFGGILRCDRLANGLIEAAKIVNIKIPVVVRLEGTNVEEGRKLLKESGLNFESAVDMWDGAQKAIKLAQ.

The ATP-grasp domain maps to 9 to 240 (KELLKKYGLP…ITQIDPLEVE (232 aa)). ATP is bound by residues Lys-46, Glu-98, Thr-101, and Glu-106. Mg(2+)-binding residues include Asn-195 and Asp-209. Residues Asn-260 and 317–319 (GIL) contribute to the substrate site.

The protein belongs to the succinate/malate CoA ligase beta subunit family. As to quaternary structure, heterotetramer of two alpha and two beta subunits. Mg(2+) is required as a cofactor.

It carries out the reaction succinate + ATP + CoA = succinyl-CoA + ADP + phosphate. The enzyme catalyses GTP + succinate + CoA = succinyl-CoA + GDP + phosphate. It functions in the pathway carbohydrate metabolism; tricarboxylic acid cycle; succinate from succinyl-CoA (ligase route): step 1/1. Its function is as follows. Succinyl-CoA synthetase functions in the citric acid cycle (TCA), coupling the hydrolysis of succinyl-CoA to the synthesis of either ATP or GTP and thus represents the only step of substrate-level phosphorylation in the TCA. The beta subunit provides nucleotide specificity of the enzyme and binds the substrate succinate, while the binding sites for coenzyme A and phosphate are found in the alpha subunit. The polypeptide is Succinate--CoA ligase [ADP-forming] subunit beta (Hydrogenobaculum sp. (strain Y04AAS1)).